A 435-amino-acid chain; its full sequence is Glutamyl-tRNA(Gln) amidotransferase subunit D (435 aa).

The Asparaginase/glutaminase domain occupies 91–419 (PDVSIISTGG…EMAREMMREN (329 aa)). Catalysis depends on residues threonine 101, threonine 177, aspartate 178, and lysine 254.

This sequence belongs to the asparaginase 1 family. GatD subfamily. As to quaternary structure, heterodimer of GatD and GatE.

The enzyme catalyses L-glutamyl-tRNA(Gln) + L-glutamine + ATP + H2O = L-glutaminyl-tRNA(Gln) + L-glutamate + ADP + phosphate + H(+). Its function is as follows. Allows the formation of correctly charged Gln-tRNA(Gln) through the transamidation of misacylated Glu-tRNA(Gln) in organisms which lack glutaminyl-tRNA synthetase. The reaction takes place in the presence of glutamine and ATP through an activated gamma-phospho-Glu-tRNA(Gln). The GatDE system is specific for glutamate and does not act on aspartate. This Methanothermobacter thermautotrophicus (strain ATCC 29096 / DSM 1053 / JCM 10044 / NBRC 100330 / Delta H) (Methanobacterium thermoautotrophicum) protein is Glutamyl-tRNA(Gln) amidotransferase subunit D (gatD).